Consider the following 145-residue polypeptide: I-leader protein (145 aa).

Belongs to the adenoviridae leader protein family.

It is found in the host cytoplasm. The protein localises to the host perinuclear region. This is I-leader protein from Human adenovirus C serotype 5 (HAdV-5).